We begin with the raw amino-acid sequence, 690 residues long: Guanylate cyclase soluble subunit alpha-1 (690 aa).

Position 266 is a phosphoserine (serine 266). The Guanylate cyclase domain maps to threonine 480–glutamate 607.

This sequence belongs to the adenylyl cyclase class-4/guanylyl cyclase family. As to quaternary structure, the active enzyme is formed by a heterodimer of an alpha and a beta subunit. Heterodimer with GUCY1B1. It depends on Mg(2+) as a cofactor. Mn(2+) serves as cofactor.

It is found in the cytoplasm. It catalyses the reaction GTP = 3',5'-cyclic GMP + diphosphate. With respect to regulation, activated by nitric oxide in the presence of magnesium or manganese ions. The polypeptide is Guanylate cyclase soluble subunit alpha-1 (Gucy1a1) (Rattus norvegicus (Rat)).